Here is a 219-residue protein sequence, read N- to C-terminus: MKALTLALFLALSLYLLPNPAHSRFNPIRLPTTHEPASSETPVLDINGDEVRAGGNYYMVYAILGACGGGLRLAHLDLMNNCASDVIVSPNDLDNGDLITITPATVDPEATVVMTSTYQTFRFNIATNKLCVNNVNWGIQYDSASGQSLLKAGEFVSDNSNQFKIEVVDANLNFYKLTYCLFGSDKCYNVGRFKDPMLRTTRLALSYYPFFFVIKPTVV.

The signal sequence occupies residues 1-23 (MKALTLALFLALSLYLLPNPAHS).

The protein belongs to the protease inhibitor I3 (leguminous Kunitz-type inhibitor) family. In terms of tissue distribution, accumulates specifically in tuberous roots and tubers upon tuberization. Sporamin accounts 60 to 80% of the total soluble protein of the organ.

It localises to the vacuole. Functionally, major tuberous root protein. The polypeptide is Sporamin A (GSPO-A1) (Ipomoea batatas (Sweet potato)).